The following is a 430-amino-acid chain: Long-chain specific acyl-CoA dehydrogenase, mitochondrial (430 aa).

The transit peptide at 1–30 (MAARLLLRSLRVLKARSAPRPPPSARCSHS) directs the protein to the mitochondrion. Positions 17–39 (SAPRPPPSARCSHSGAEARLETP) are disordered. An N6-acetyllysine modification is found at lysine 42. Residues serine 54 and serine 55 each carry the phosphoserine modification. Residues lysine 66 and lysine 81 each carry the N6-acetyllysine; alternate modification. Lysine 66 and lysine 81 each carry N6-succinyllysine; alternate. Lysine 92 and lysine 95 each carry N6-acetyllysine. Lysine 165 bears the N6-succinyllysine mark. Residue 170–179 (IAMTEPGAGS) coordinates FAD. Residue serine 179 coordinates substrate. Phosphoserine is present on serine 191. Residue 203-205 (FIT) participates in FAD binding. Residue 227–228 (AH) participates in substrate binding. Lysine 240 carries the N6-succinyllysine modification. 2 positions are modified to N6-acetyllysine; alternate: lysine 254 and lysine 279. Lysine 254 and lysine 279 each carry N6-succinyllysine; alternate. Residues tyrosine 282 and 289-292 (PQER) contribute to the substrate site. Catalysis depends on glutamate 291, which acts as the Proton acceptor. Arginine 317 is a binding site for FAD. Residue lysine 318 is modified to N6-acetyllysine. N6-acetyllysine; alternate is present on lysine 322. Position 322 is an N6-succinyllysine; alternate (lysine 322). Residue glutamine 328 participates in FAD binding. N6-acetyllysine is present on lysine 358. Serine 362 carries the post-translational modification Phosphoserine. Residue 385 to 389 (QLHGG) coordinates FAD. Residue 412 to 413 (GG) coordinates substrate. FAD is bound at residue 414–416 (TNE).

It belongs to the acyl-CoA dehydrogenase family. In terms of assembly, homotetramer. The cofactor is FAD. Acetylation at Lys-318 and Lys-322 in proximity of the cofactor-binding sites strongly reduces catalytic activity. These sites are deacetylated by SIRT3. Expressed in heart, skeletal muscle, kidney, and brain. Expressed in liver (at protein level).

It is found in the mitochondrion matrix. The catalysed reaction is a long-chain 2,3-saturated fatty acyl-CoA + oxidized [electron-transfer flavoprotein] + H(+) = a long-chain (2E)-enoyl-CoA + reduced [electron-transfer flavoprotein]. The enzyme catalyses oxidized [electron-transfer flavoprotein] + hexadecanoyl-CoA + H(+) = (2E)-hexadecenoyl-CoA + reduced [electron-transfer flavoprotein]. It carries out the reaction hexanoyl-CoA + oxidized [electron-transfer flavoprotein] + H(+) = (2E)-hexenoyl-CoA + reduced [electron-transfer flavoprotein]. It catalyses the reaction octanoyl-CoA + oxidized [electron-transfer flavoprotein] + H(+) = (2E)-octenoyl-CoA + reduced [electron-transfer flavoprotein]. The catalysed reaction is decanoyl-CoA + oxidized [electron-transfer flavoprotein] + H(+) = (2E)-decenoyl-CoA + reduced [electron-transfer flavoprotein]. The enzyme catalyses dodecanoyl-CoA + oxidized [electron-transfer flavoprotein] + H(+) = (2E)-dodecenoyl-CoA + reduced [electron-transfer flavoprotein]. It carries out the reaction tetradecanoyl-CoA + oxidized [electron-transfer flavoprotein] + H(+) = (2E)-tetradecenoyl-CoA + reduced [electron-transfer flavoprotein]. It catalyses the reaction octadecanoyl-CoA + oxidized [electron-transfer flavoprotein] + H(+) = (2E)-octadecenoyl-CoA + reduced [electron-transfer flavoprotein]. The catalysed reaction is eicosanoyl-CoA + oxidized [electron-transfer flavoprotein] + H(+) = (2E)-eicosenoyl-CoA + reduced [electron-transfer flavoprotein]. The enzyme catalyses docosanoyl-CoA + oxidized [electron-transfer flavoprotein] + H(+) = (2E)-docosenoyl-CoA + reduced [electron-transfer flavoprotein]. It carries out the reaction tetracosanoyl-CoA + oxidized [electron-transfer flavoprotein] + H(+) = (2E)-tetracosenoyl-CoA + reduced [electron-transfer flavoprotein]. It catalyses the reaction (5E)-tetradecenoyl-CoA + oxidized [electron-transfer flavoprotein] + H(+) = (2E,5E)-tetradecadienoyl-CoA + reduced [electron-transfer flavoprotein]. The catalysed reaction is (5Z)-tetradecenoyl-CoA + oxidized [electron-transfer flavoprotein] + H(+) = (2E,5Z)-tetradecadienoyl-CoA + reduced [electron-transfer flavoprotein]. The enzyme catalyses oxidized [electron-transfer flavoprotein] + (9Z)-octadecenoyl-CoA + H(+) = (2E,9Z)-octadecadienoyl-CoA + reduced [electron-transfer flavoprotein]. It functions in the pathway lipid metabolism; mitochondrial fatty acid beta-oxidation. Long-chain specific acyl-CoA dehydrogenase is one of the acyl-CoA dehydrogenases that catalyze the first step of mitochondrial fatty acid beta-oxidation, an aerobic process breaking down fatty acids into acetyl-CoA and allowing the production of energy from fats. The first step of fatty acid beta-oxidation consists in the removal of one hydrogen from C-2 and C-3 of the straight-chain fatty acyl-CoA thioester, resulting in the formation of trans-2-enoyl-CoA. Among the different mitochondrial acyl-CoA dehydrogenases, long-chain specific acyl-CoA dehydrogenase can act on saturated and unsaturated acyl-CoAs with 6 to 24 carbons with a preference for 8 to 18 carbons long primary chains. In Mus musculus (Mouse), this protein is Long-chain specific acyl-CoA dehydrogenase, mitochondrial.